The chain runs to 366 residues: Tyrosine--tRNA ligase (366 aa).

The L-tyrosine site is built by tyrosine 41, tyrosine 167, glutamine 171, aspartate 174, and glutamine 189. The 'KMSKS' region signature appears at 241-245; it reads KMSKS. Lysine 244 contacts ATP.

The protein belongs to the class-I aminoacyl-tRNA synthetase family. TyrS type 4 subfamily. As to quaternary structure, homodimer.

The protein resides in the cytoplasm. It catalyses the reaction tRNA(Tyr) + L-tyrosine + ATP = L-tyrosyl-tRNA(Tyr) + AMP + diphosphate + H(+). Its function is as follows. Catalyzes the attachment of tyrosine to tRNA(Tyr) in a two-step reaction: tyrosine is first activated by ATP to form Tyr-AMP and then transferred to the acceptor end of tRNA(Tyr). This Saccharolobus solfataricus (strain ATCC 35092 / DSM 1617 / JCM 11322 / P2) (Sulfolobus solfataricus) protein is Tyrosine--tRNA ligase.